Consider the following 619-residue polypeptide: CREB-regulated transcription coactivator 3 (619 aa).

The required for interaction with HTLV-1 TAX stretch occupies residues 1 to 103 (MAASPGSGSA…LVERPSRNRF (103 aa)). Residues Ser4 and Ser62 each carry the phosphoserine modification. Residues 103 to 150 (FHPLHRRSGDKPGRQFDGSAFGANYSSQPLDESWPRQQPPWKDEKHPG) are disordered. The residue at position 160 (Thr160) is a Phosphothreonine. Phosphoserine; by SIK2 is present on Ser162. Polar residues predominate over residues 165–175 (ALHTSALSTKP). Residues 165–185 (ALHTSALSTKPQDPYGGGGQS) form a disordered region. Lys232 is covalently cross-linked (Glycyl lysine isopeptide (Lys-Gly) (interchain with G-Cter in SUMO2)). 8 positions are modified to phosphoserine: Ser273, Ser329, Ser332, Ser370, Ser391, Ser396, Ser410, and Ser443. The disordered stretch occupies residues 375-431 (STTNLSGPSRRRQPPVSPLTLSPGPEAHQGFSRQLSSTSPLAPYPTSQMVSSDRSQL). Residues 380–401 (SGPSRRRQPPVSPLTLSPGPEA) are required for interaction with PPP2CA and PPP2R1A. Positions 405–431 (FSRQLSSTSPLAPYPTSQMVSSDRSQL) are enriched in polar residues.

Belongs to the TORC family. In terms of assembly, binding, as a tetramer, through its N-terminal region, with the bZIP domain of CREB1 enhances recruitment of TAF4 to the promoter. 'Arg-314' in the bZIP domain of CREB1 is essential for this interaction. Interacts (when phosphorylated at Ser-162 and Se-273) with 14-3-3 proteins. Interacts with YWHAE. Interacts (when phosphorylated at Ser-391) with phosphatase PP2A catalytic subunit PPP2CA and regulatory subunits PPP2R1A and PPP2R2A. Interacts, via the N-terminal with the ankyrin repeats of BCL3, to form a complex with CREB1 on CRE and TxRE responsive elements and represses HTLV-1 LTR-mediated transcription. (Microbial infection) Interacts with HTLV-1 protein Tax; this interaction enhances tax transcriptional activity. In terms of processing, phosphorylation/dephosphorylation states of Ser-273 are required for regulating transduction of CREB activity. CRTCs/TORCs are inactive when phosphorylated, and active when dephosphorylated at this site. May be phosphorylated at Ser-391 by MAPK3/ERK1 and/or MAPK1/ERK2 or by some cyclin-dependent kinases such as CDK1,CDK2 or CDK5. Following adenylyl cyclase activation, dephosphorylated at Ser-162 and Ser-273 resulting in its dissociation from 14-3-3 proteins probably promoting CRTC3 translocation into the nucleus. Predominantly expressed in B and T lymphocytes. Highest levels in lung. Also expressed in brain, colon, heart, kidney, ovary, and prostate. Weak expression in liver, pancreas, muscle, small intestine, spleen and stomach.

The protein localises to the nucleus. It is found in the cytoplasm. Functionally, transcriptional coactivator for CREB1 which activates transcription through both consensus and variant cAMP response element (CRE) sites. Acts as a coactivator, in the SIK/TORC signaling pathway, being active when dephosphorylated and acts independently of CREB1 'Ser-133' phosphorylation. Enhances the interaction of CREB1 with TAF4. Regulates the expression of specific CREB-activated genes such as the steroidogenic gene, StAR. Potent coactivator of PPARGC1A and inducer of mitochondrial biogenesis in muscle cells. Also coactivator for TAX activation of the human T-cell leukemia virus type 1 (HTLV-1) long terminal repeats (LTR). In Homo sapiens (Human), this protein is CREB-regulated transcription coactivator 3 (CRTC3).